A 607-amino-acid polypeptide reads, in one-letter code: Arginine--tRNA ligase (607 aa).

The 'HIGH' region signature appears at 147-157 (PNIAKEMHVGH).

It belongs to the class-I aminoacyl-tRNA synthetase family. In terms of assembly, monomer.

The protein localises to the cytoplasm. It carries out the reaction tRNA(Arg) + L-arginine + ATP = L-arginyl-tRNA(Arg) + AMP + diphosphate. The polypeptide is Arginine--tRNA ligase (Prochlorococcus marinus (strain NATL2A)).